The sequence spans 993 residues: DNA-binding protein SMUBP-2 (993 aa).

Alanine 2 carries the N-acetylalanine modification. Residues 213–220 (GPPGTGKT), glutamine 402, tyrosine 441, and glutamate 570 each bind ATP. Residues 637–783 (TAFEYLDDIV…KARHITVSRR (147 aa)) are SS DNA-binding. Disordered stretches follow at residues 650-723 (YTHE…GPDR), 765-815 (LRHD…EPVT), and 837-872 (RQQS…KGPV). Polar residues-rich tracts occupy residues 667-683 (PSTS…SGQE) and 703-716 (HVQS…NGSD). Residues 721–784 (PDRTEHFRAT…ARHITVSRRS (64 aa)) form the R3H domain. A compositionally biased stretch (basic and acidic residues) spans 765–775 (LRHDSTGEGKA). Positions 784-794 (SPASSGSVAPQ) are enriched in low complexity. Serine 797 and serine 800 each carry phosphoserine. The span at 837–847 (RQQSSQAQTAK) shows a compositional bias: polar residues. Residues 862–866 (KKKKK) carry the Nuclear localization signal motif. The AN1-type; degenerate zinc finger occupies 889-938 (VKADNTCSFSKCSVSTTTLGQFCMHCSHRYYLSHHLPEIHGCGEKARAHA). The Zn(2+) site is built by cysteine 911, cysteine 914, histidine 928, and cysteine 930. Residues 953-993 (GTKDRALDPAKRAQLQRRLDKKLGELSSQRTSRKKEKERGT) are disordered. Basic and acidic residues predominate over residues 954–976 (TKDRALDPAKRAQLQRRLDKKLG).

Belongs to the DNA2/NAM7 helicase family. In terms of assembly, homooligomer. Interacts with RUVBL1. Interacts with RUVBL2. Interacts with GTF3C1. Interacts with ABT1. Interacts with ribosomes. As to expression, in all tissues examined.

The protein resides in the nucleus. The protein localises to the cytoplasm. It is found in the cell projection. Its subcellular location is the axon. The enzyme catalyses ATP + H2O = ADP + phosphate + H(+). In terms of biological role, 5' to 3' helicase that unwinds RNA and DNA duplexes in an ATP-dependent reaction. Specific to 5'-phosphorylated single-stranded guanine-rich sequences. May play a role in RNA metabolism, ribosome biogenesis or initiation of translation. May play a role in regulation of transcription. Interacts with tRNA-Tyr. The protein is DNA-binding protein SMUBP-2 (Ighmbp2) of Mus musculus (Mouse).